A 351-amino-acid chain; its full sequence is tRNA pseudouridine synthase D (351 aa).

Aspartate 81 functions as the Nucleophile in the catalytic mechanism. A TRUD domain is found at 158–304 (GVPNYFGSQR…MRHERRAIEL (147 aa)).

It belongs to the pseudouridine synthase TruD family.

It carries out the reaction uridine(13) in tRNA = pseudouridine(13) in tRNA. In terms of biological role, responsible for synthesis of pseudouridine from uracil-13 in transfer RNAs. The chain is tRNA pseudouridine synthase D from Aliivibrio fischeri (strain MJ11) (Vibrio fischeri).